Reading from the N-terminus, the 180-residue chain is Adenine phosphoribosyltransferase (180 aa).

N-acetylserine is present on serine 2. Serine 15 and serine 30 each carry phosphoserine. At tyrosine 60 the chain carries Phosphotyrosine. Residue serine 66 is modified to Phosphoserine. An N6-acetyllysine modification is found at lysine 114. A Phosphothreonine modification is found at threonine 135.

The protein belongs to the purine/pyrimidine phosphoribosyltransferase family. As to quaternary structure, homodimer.

The protein localises to the cytoplasm. The catalysed reaction is AMP + diphosphate = 5-phospho-alpha-D-ribose 1-diphosphate + adenine. Its pathway is purine metabolism; AMP biosynthesis via salvage pathway; AMP from adenine: step 1/1. Functionally, catalyzes a salvage reaction resulting in the formation of AMP, that is energically less costly than de novo synthesis. The sequence is that of Adenine phosphoribosyltransferase from Stochomys longicaudatus (Target rat).